Here is a 410-residue protein sequence, read N- to C-terminus: O-methyltransferase afvC (410 aa).

Residues 253–254 (GG), Asp278, 299–300 (DF), and Arg315 each bind S-adenosyl-L-methionine. His319 serves as the catalytic Proton acceptor.

The protein belongs to the class I-like SAM-binding methyltransferase superfamily. Cation-independent O-methyltransferase family. COMT subfamily.

Its pathway is secondary metabolite biosynthesis. Functionally, O-methyltransferase; part of the gene cluster that mediates the biosynthesis of aflavarin, a bicoumarin that exhibits anti-insectan activity against the fungivorous beetle C.hemipterus. In Aspergillus flavus (strain ATCC 200026 / FGSC A1120 / IAM 13836 / NRRL 3357 / JCM 12722 / SRRC 167), this protein is O-methyltransferase afvC.